Here is a 660-residue protein sequence, read N- to C-terminus: MDSDLDRILPIASRALLCEGNRDWAGAYVSYCKVLEEMKKSSAARDRMGLGPLTGAEACSWNGLYDNCLSKASKLRKTILESEMERQNYQLAAKLSKKAPVDLHPLRPVRSQTPAYTPMTTRMMYRQTRGAQSEVNLSTPKQIYSKHSPPSTSTSSIVSSSYGDAPSYLAPSKPNRSPPLKPEDPFASFNSSASAIAAASKSAAASASALSSDTGRSATMNSTTFPTAMKSQSTTKPTLSNSVSSPSIQVSNNQNANNSTPLSFHAPIPPLHVPAVPLTSASHSSSDGKSRKHPSPYKPYLNSSHDTLGSSTRPSSADTAGSPATSPPATADSKTIVSKTISASTTQQTEPLQQTTPSSDFEYAIMNEIISNHEPVYWSDIAGLDDAKNSLKEAVIYPFLRPELFQGLREPVQGMLLFGPPGTGKTMLARAVATEAKATFFSISASSLTSKYLGDSEKLVRALFEVAKRQTCSVIFVDEIDSILSARNDSGNEHESSRRLKTEFLIQWSSLTNAAPDKQTGHSPRVLVLAATNLPWCIDEAARRRFVKRTYIPLPEKETRYKHLSHLLHNQVHCLTEEDLEELVNLTEGYSGSDITALAKDAAMGPLRNLGDALLTTSAEMIPPISLNHFKASLRTIRPSVSQEGIHRYEEWNKQFGSQR.

Disordered stretches follow at residues 141 to 186 (KQIY…EDPF) and 209 to 334 (ALSS…ADSK). Residues 145-161 (SKHSPPSTSTSSIVSSS) show a composition bias toward low complexity. Serine 177 carries the phosphoserine modification. The span at 213-239 (DTGRSATMNSTTFPTAMKSQSTTKPTL) shows a compositional bias: polar residues. Positions 240 to 255 (SNSVSSPSIQVSNNQN) are enriched in low complexity. Residues 301–313 (LNSSHDTLGSSTR) show a composition bias toward polar residues. Low complexity predominate over residues 314–333 (PSSADTAGSPATSPPATADS). ATP is bound at residue 419 to 426 (GPPGTGKT).

This sequence belongs to the AAA ATPase family.

It localises to the nucleus. The protein is ATPase-like fidgetin (alf1) of Schizosaccharomyces pombe (strain 972 / ATCC 24843) (Fission yeast).